The sequence spans 201 residues: 3-isopropylmalate dehydratase small subunit (201 aa).

Belongs to the LeuD family. LeuD type 1 subfamily. As to quaternary structure, heterodimer of LeuC and LeuD.

The catalysed reaction is (2R,3S)-3-isopropylmalate = (2S)-2-isopropylmalate. The protein operates within amino-acid biosynthesis; L-leucine biosynthesis; L-leucine from 3-methyl-2-oxobutanoate: step 2/4. Catalyzes the isomerization between 2-isopropylmalate and 3-isopropylmalate, via the formation of 2-isopropylmaleate. In Escherichia coli O9:H4 (strain HS), this protein is 3-isopropylmalate dehydratase small subunit.